A 3410-amino-acid chain; its full sequence is Genome polyprotein (3410 aa).

Topologically, residues 1–103 (MTKKPGRPGR…DFVHLPKKKS (103 aa)) are cytoplasmic. The segment at 2–15 (TKKPGRPGRNRAVN) is interaction with host EXOC1. Positions 38–73 (LLDGRGPLRMVLAILAFFRFTALKPTAGLLKRWGMM) are hydrophobic; homodimerization of capsid protein C. A propeptide spans 103–119 (SGVSIIGRMLVFSFTAA) (ER anchor for the capsid protein C, removed in mature form by serine protease NS3). The chain crosses the membrane as a helical span at residues 104–124 (GVSIIGRMLVFSFTAAVRVTL). Topologically, residues 125 to 245 (ENGMSLMKIQ…ATSYLTKAES (121 aa)) are extracellular. The helical transmembrane segment at 246 to 266 (WALRNPGYALVAAVLGWSLGT) threads the bilayer. At 267-271 (SNAQK) the chain is on the cytoplasmic side. A helical transmembrane segment spans residues 272-286 (VIFTVMILLIAPAYS). Over 287–739 (IRCVGVENRD…QIFGGMFRTL (453 aa)) the chain is Extracellular. 6 cysteine pairs are disulfide-bonded: Cys289/Cys316, Cys346/Cys402, Cys346/Cys407, Cys360/Cys391, Cys378/Cys402, and Cys378/Cys407. A fusion peptide region spans residues 384–397 (DRGWGNGCGLFGKG). An N-linked (GlcNAc...) asparagine; by host glycan is attached at Asn440. 2 disulfide bridges follow: Cys476-Cys574 and Cys591-Cys622. Residues 740-760 (FGGMSWFTQIMIGALCCWLGI) traverse the membrane as a helical segment. The Cytoplasmic portion of the chain corresponds to 761-766 (NARDRT). Residues 767–787 (IAVTFLAVGGVLVFLATSVNA) traverse the membrane as a helical segment. At 788-1165 (DSGCALDLKR…IALQEVMRKR (378 aa)) the chain is on the extracellular side. 8 disulfide bridges follow: Cys791–Cys802, Cys842–Cys928, Cys964–Cys1009, Cys1066–Cys1115, Cys1077–Cys1098, Cys1077–Cys1099, Cys1098–Cys1102, and Cys1099–Cys1102. A glycan (N-linked (GlcNAc...) asparagine; by host) is linked at Asn915. Residues 1166-1186 (ILGRHITWMVIAVFMAMILGG) traverse the membrane as a helical segment. Residues 1187-1214 (LSYRDLGRYLVLVGAAFAERNSGGDLLH) are Cytoplasmic-facing. The helical transmembrane segment at 1215–1235 (LVLVATFKVKPMALLGFVLGG) threads the bilayer. Residues 1236–1242 (RWCRRQS) lie on the Lumenal side of the membrane. A helical membrane pass occupies residues 1243–1263 (LLLSIGAVLVNFALEFQGGYF). Over 1264–1284 (ELVDSLALALLFVKAVVQTDT) the chain is Cytoplasmic. The helical transmembrane segment at 1285–1305 (TSVSLPLLAALAPAGCYTVLG) threads the bilayer. Residues 1306 to 1335 (THRFIMLTLVLVTFLGCKKTASVKKAGTAA) are Lumenal-facing. A helical transmembrane segment spans residues 1336–1356 (VGVVLGMVGMKTIPMLGMLMV). Topologically, residues 1357-1363 (TSRARRS) are cytoplasmic. A helical membrane pass occupies residues 1364–1384 (WPLHEAMAAVGILCALFGALA). Topologically, residues 1385-1387 (ETE) are lumenal. The helical transmembrane segment at 1388–1408 (VDLAGPLAAAGLIVMAYVISG) threads the bilayer. Over 1409–1464 (RSNDLSIKKVEDVKWSDEAEVTGESVSYHVSLDVRGDPTLTEDSGPGLEKVLLKVG) the chain is Cytoplasmic. The segment at 1415 to 1454 (IKKVEDVKWSDEAEVTGESVSYHVSLDVRGDPTLTEDSGP) is interacts with and activates NS3 protease. The segment at residues 1465–1485 (LMAISGIYPVAIPFALGAWFF) is an intramembrane region (helical). At 1486-2158 (LEKRCKRAGA…KAALENSPEM (673 aa)) the chain is on the cytoplasmic side. In terms of domain architecture, Peptidase S7 spans 1493-1670 (AGALWDIPSP…ENVGQEDGAE (178 aa)). Catalysis depends on charge relay system; for serine protease NS3 activity residues His1543, Asp1567, and Ser1627. Residues 1673–1829 (DNWFRKRELT…PSNSPIIDEE (157 aa)) form the Helicase ATP-binding domain. Residues 1677–1680 (RKRE) are important for RNA-binding. 1686–1693 (LHPGAGKT) provides a ligand contact to ATP. A DEAH box motif is present at residues 1777-1780 (DEAH). Residues 1839–2006 (SGYEWIIEFD…QLYTPEREKT (168 aa)) form the Helicase C-terminal domain. The residue at position 1881 (Lys1881) is an N6-acetyllysine; by host. The interval 2153 to 2157 (ENSPE) is regulates the ATPase activity of NS3 helicase. The chain crosses the membrane as a helical span at residues 2159-2179 (IETFLLCALVCLMTIGLVVVL). The Lumenal portion of the chain corresponds to 2180–2185 (VRGKGP). The segment at residues 2186–2205 (GKLAFGMVSIGVMTWLLWSA) is an intramembrane region (helical). Residue Gly2206 is a topological domain, lumenal. A helical membrane pass occupies residues 2207-2227 (VDPGKIAAAVILVFLLLVVLI). Over 2228–2242 (PEPEKQRSVQDNQLA) the chain is Cytoplasmic. Residues 2243-2257 (MLMLLIATILGGVAA) form a helical membrane-spanning segment. Over 2258–2293 (NEMGWLEKTKADLSWVVRGRSSTTTPVVELDMKPAT) the chain is Lumenal. Residues 2294-2314 (AWTLYALATTLLTPLFQHLIV) constitute an intramembrane region (helical). Residues 2315–2336 (TKYANISLMAIASQAGTLFSMD) lie on the Lumenal side of the membrane. Residues 2337–2357 (SGIPFSSIELSVPLLALGCWT) traverse the membrane as a helical segment. Gln2358 is a topological domain (cytoplasmic). The chain crosses the membrane as a helical span at residues 2359-2379 (ITPCSLILACVLLSTHYAILL). The Lumenal segment spans residues 2380–2420 (PGMQAQAARDAQRRTAAGIMKNAVVDGIVATDIPPLDGAGP). The helical transmembrane segment at 2421–2441 (LTEKKLGQLLLFAAAVTGVVI) threads the bilayer. Residues 2442 to 3410 (TRSPRSWSEL…EKRVEFRGVL (969 aa)) are Cytoplasmic-facing. One can recognise an mRNA cap 0-1 NS5-type MT domain in the interval 2508–2773 (GGGIGETLGE…DVNLSCGTRA (266 aa)). Position 2563 (Ser2563) interacts with S-adenosyl-L-methionine. The residue at position 2563 (Ser2563) is a Phosphoserine. Lys2568 (for 2'-O-MTase activity) is an active-site residue. Residues Gly2593, Trp2594, Thr2611, Lys2612, Asp2638, and Val2639 each contribute to the S-adenosyl-L-methionine site. Residue Asp2653 is the For 2'-O-MTase activity of the active site. Ile2654 is an S-adenosyl-L-methionine binding site. Active-site for 2'-O-MTase activity residues include Lys2690 and Glu2726. Tyr2728 serves as a coordination point for S-adenosyl-L-methionine. Zn(2+) is bound by residues Glu2947, His2951, Cys2956, and Cys2959. Positions 3036–3187 (GILYADDTAG…AAPDARFGAA (152 aa)) constitute a RdRp catalytic domain. Zn(2+) contacts are provided by His3222, Cys3238, and Cys3356.

In the N-terminal section; belongs to the class I-like SAM-binding methyltransferase superfamily. mRNA cap 0-1 NS5-type methyltransferase family. In terms of assembly, homodimer. Interacts (via N-terminus) with host EXOC1 (via C-terminus); this interaction results in EXOC1 degradation through the proteasome degradation pathway. Forms heterodimers with envelope protein E in the endoplasmic reticulum and Golgi. As to quaternary structure, homodimer; in the endoplasmic reticulum and Golgi. Interacts with protein prM. Interacts with non-structural protein 1. In terms of assembly, homodimer; Homohexamer when secreted. Interacts with envelope protein E. NS1 interacts with NS4B. Interacts with host complement protein CFH; this interaction leads to the degradation of C3. Interacts (via N-terminus) with serine protease NS3. As to quaternary structure, forms a heterodimer with serine protease NS3. May form homooligomers. In terms of assembly, forms a heterodimer with NS2B. Interacts with non-structural protein 2A (via N-terminus). Interacts with NS4B. Interacts with unphosphorylated RNA-directed RNA polymerase NS5; this interaction stimulates RNA-directed RNA polymerase NS5 guanylyltransferase activity. Interacts with serine protease NS3. As to quaternary structure, homodimer. Interacts with host STAT2; this interaction inhibits the phosphorylation of the latter, and, when all viral proteins are present (polyprotein), targets STAT2 for degradation. Post-translationally, specific enzymatic cleavages in vivo yield mature proteins. Cleavages in the lumen of endoplasmic reticulum are performed by host signal peptidase, whereas cleavages in the cytoplasmic side are performed by serine protease NS3. Signal cleavage at the 2K-4B site requires a prior NS3 protease-mediated cleavage at the 4A-2K site. In terms of processing, cleaved in post-Golgi vesicles by a host furin, releasing the mature small envelope protein M, and peptide pr. This cleavage is incomplete as up to 30% of viral particles still carry uncleaved prM. N-glycosylated. Post-translationally, N-glycosylated. The excreted form is glycosylated and this is required for efficient secretion of the protein from infected cells. In terms of processing, acetylated by host KAT5. Acetylation modulates NS3 RNA-binding and unwinding activities and plays an important positive role for viral replication. Phosphorylated on serines residues. This phosphorylation may trigger NS5 nuclear localization.

Its subcellular location is the virion. It is found in the host nucleus. The protein resides in the host cytoplasm. The protein localises to the host perinuclear region. It localises to the secreted. Its subcellular location is the virion membrane. It is found in the host endoplasmic reticulum membrane. It carries out the reaction Selective hydrolysis of -Xaa-Xaa-|-Yaa- bonds in which each of the Xaa can be either Arg or Lys and Yaa can be either Ser or Ala.. The enzyme catalyses RNA(n) + a ribonucleoside 5'-triphosphate = RNA(n+1) + diphosphate. It catalyses the reaction a ribonucleoside 5'-triphosphate + H2O = a ribonucleoside 5'-diphosphate + phosphate + H(+). The catalysed reaction is ATP + H2O = ADP + phosphate + H(+). It carries out the reaction a 5'-end (5'-triphosphoguanosine)-ribonucleoside in mRNA + S-adenosyl-L-methionine = a 5'-end (N(7)-methyl 5'-triphosphoguanosine)-ribonucleoside in mRNA + S-adenosyl-L-homocysteine. The enzyme catalyses a 5'-end (N(7)-methyl 5'-triphosphoguanosine)-ribonucleoside in mRNA + S-adenosyl-L-methionine = a 5'-end (N(7)-methyl 5'-triphosphoguanosine)-(2'-O-methyl-ribonucleoside) in mRNA + S-adenosyl-L-homocysteine + H(+). In terms of biological role, plays a role in virus budding by binding to the cell membrane and gathering the viral RNA into a nucleocapsid that forms the core of a mature virus particle. During virus entry, may induce genome penetration into the host cytoplasm after hemifusion induced by the surface proteins. Can migrate to the cell nucleus where it modulates host functions. Overcomes the anti-viral effects of host EXOC1 by sequestering and degrading the latter through the proteasome degradation pathway. Functionally, inhibits RNA silencing by interfering with host Dicer. Its function is as follows. Prevents premature fusion activity of envelope proteins in trans-Golgi by binding to envelope protein E at pH6.0. After virion release in extracellular space, gets dissociated from E dimers. Acts as a chaperone for envelope protein E during intracellular virion assembly by masking and inactivating envelope protein E fusion peptide. prM is the only viral peptide matured by host furin in the trans-Golgi network probably to avoid catastrophic activation of the viral fusion activity in acidic Golgi compartment prior to virion release. prM-E cleavage is inefficient, and many virions are only partially matured. These uncleaved prM would play a role in immune evasion. In terms of biological role, may play a role in virus budding. Exerts cytotoxic effects by activating a mitochondrial apoptotic pathway through M ectodomain. May display a viroporin activity. Functionally, binds to host cell surface receptor and mediates fusion between viral and cellular membranes. Envelope protein is synthesized in the endoplasmic reticulum in the form of heterodimer with protein prM. They play a role in virion budding in the ER, and the newly formed immature particle is covered with 60 spikes composed of heterodimer between precursor prM and envelope protein E. The virion is transported to the Golgi apparatus where the low pH causes dissociation of PrM-E heterodimers and formation of E homodimers. prM-E cleavage is inefficient, and many virions are only partially matured. These uncleaved prM would play a role in immune evasion. Its function is as follows. Involved in immune evasion, pathogenesis and viral replication. Once cleaved off the polyprotein, is targeted to three destinations: the viral replication cycle, the plasma membrane and the extracellular compartment. Essential for viral replication. Required for formation of the replication complex and recruitment of other non-structural proteins to the ER-derived membrane structures. Excreted as a hexameric lipoparticle that plays a role against host immune response. Antagonizing the complement function. Binds to the host macrophages and dendritic cells. Inhibits signal transduction originating from Toll-like receptor 3 (TLR3). Component of the viral RNA replication complex that functions in virion assembly and antagonizes the host alpha/beta interferon antiviral response. In terms of biological role, required cofactor for the serine protease function of NS3. May have membrane-destabilizing activity and form viroporins. Functionally, displays three enzymatic activities: serine protease, NTPase and RNA helicase. NS3 serine protease, in association with NS2B, performs its autocleavage and cleaves the polyprotein at dibasic sites in the cytoplasm: C-prM, NS2A-NS2B, NS2B-NS3, NS3-NS4A, NS4A-2K and NS4B-NS5. NS3 RNA helicase binds RNA and unwinds dsRNA in the 3' to 5' direction. Its function is as follows. Regulates the ATPase activity of the NS3 helicase activity. NS4A allows NS3 helicase to conserve energy during unwinding. Functions as a signal peptide for NS4B and is required for the interferon antagonism activity of the latter. In terms of biological role, induces the formation of ER-derived membrane vesicles where the viral replication takes place. Inhibits interferon (IFN)-induced host STAT1 phosphorylation and nuclear translocation, thereby preventing the establishment of cellular antiviral state by blocking the IFN-alpha/beta pathway. Inhibits STAT2 translocation in the nucleus after IFN-alpha treatment. Functionally, replicates the viral (+) and (-) RNA genome, and performs the capping of genomes in the cytoplasm. NS5 methylates viral RNA cap at guanine N-7 and ribose 2'-O positions. Besides its role in RNA genome replication, also prevents the establishment of cellular antiviral state by blocking the interferon-alpha/beta (IFN-alpha/beta) signaling pathway. Inhibits host TYK2 and STAT2 phosphorylation, thereby preventing activation of JAK-STAT signaling pathway. This chain is Genome polyprotein, found in Kokobera virus (KOKV).